We begin with the raw amino-acid sequence, 150 residues long: Ribonuclease H (150 aa).

The 146-residue stretch at 1-146 (MPELFAYTDG…ADELARAGMA (146 aa)) folds into the RNase H type-1 domain. Mg(2+) is bound by residues Asp9, Glu52, Asp74, and Asp138.

This sequence belongs to the RNase H family. In terms of assembly, monomer. Requires Mg(2+) as cofactor.

Its subcellular location is the cytoplasm. The catalysed reaction is Endonucleolytic cleavage to 5'-phosphomonoester.. Its function is as follows. Endonuclease that specifically degrades the RNA of RNA-DNA hybrids. This is Ribonuclease H from Roseobacter denitrificans (strain ATCC 33942 / OCh 114) (Erythrobacter sp. (strain OCh 114)).